The following is a 346-amino-acid chain: Upstream stimulatory factor 2 (346 aa).

2 disordered regions span residues 1 to 44 and 215 to 244; these read MDML…PGAE and APRTHPYSPKIDGTRTPRDERRRAQHNEVE. Over residues 11–20 the composition is skewed to low complexity; sequence ASSATAAAAA. Basic and acidic residues predominate over residues 226-244; the sequence is DGTRTPRDERRRAQHNEVE. Residues 235–290 enclose the bHLH domain; the sequence is RRRAQHNEVERRRRDKINNWIVQLSKIIPDCHADNSKTGASKGGILSKACDYIREL. The interval 307–328 is leucine-zipper; sequence LQMDNELLRQQIEELKNENALL.

Efficient DNA binding requires dimerization with another bHLH protein. Binds DNA as a homodimer or a heterodimer (USF1/USF2). Interacts with MAF.

The protein localises to the nucleus. In terms of biological role, transcription factor that binds to a symmetrical DNA sequence (E-boxes) (5'-CACGTG-3') that is found in a variety of viral and cellular promoters. The polypeptide is Upstream stimulatory factor 2 (Usf2) (Mus musculus (Mouse)).